The sequence spans 297 residues: Protein muscleblind (297 aa).

2 C3H1-type zinc fingers span residues 18–46 (WLQLEVCREFQRNKCSRQDTECKFAHPPA) and 52–80 (NGKVTACYDSIKGRCNRDKPPCKYFHPPQ).

This sequence belongs to the muscleblind family. In terms of tissue distribution, expressed in embryonic muscle cells.

It is found in the nucleus. Required for terminal differentiation of photoreceptor cells. Vital for embryonic development. The sequence is that of Protein muscleblind (mbl) from Drosophila melanogaster (Fruit fly).